The primary structure comprises 275 residues: ATP synthase subunit delta (275 aa).

Belongs to the ATPase delta chain family. In terms of assembly, F-type ATPases have 2 components, F(1) - the catalytic core - and F(0) - the membrane proton channel. F(1) has five subunits: alpha(3), beta(3), gamma(1), delta(1), epsilon(1). F(0) has three main subunits: a(1), b(2) and c(10-14). The alpha and beta chains form an alternating ring which encloses part of the gamma chain. F(1) is attached to F(0) by a central stalk formed by the gamma and epsilon chains, while a peripheral stalk is formed by the delta and b chains.

It is found in the cell membrane. F(1)F(0) ATP synthase produces ATP from ADP in the presence of a proton or sodium gradient. F-type ATPases consist of two structural domains, F(1) containing the extramembraneous catalytic core and F(0) containing the membrane proton channel, linked together by a central stalk and a peripheral stalk. During catalysis, ATP synthesis in the catalytic domain of F(1) is coupled via a rotary mechanism of the central stalk subunits to proton translocation. Its function is as follows. This protein is part of the stalk that links CF(0) to CF(1). It either transmits conformational changes from CF(0) to CF(1) or is implicated in proton conduction. In Nocardioides sp. (strain ATCC BAA-499 / JS614), this protein is ATP synthase subunit delta.